A 592-amino-acid polypeptide reads, in one-letter code: Protein alan shepard (592 aa).

The tract at residues Met-1–Pro-68 is disordered. The span at Val-18–Ala-28 shows a compositional bias: gly residues. The span at Pro-36–Gly-54 shows a compositional bias: polar residues. Residues Ser-55–Ala-64 are compositionally biased toward low complexity. Tyr-124 and Tyr-140 each carry phosphotyrosine. A disordered region spans residues Pro-162 to Glu-224. The segment covering Ser-176–Glu-224 has biased composition (low complexity). RRM domains are found at residues Thr-229–Leu-307 and Thr-319–Gly-398. The segment at Pro-565 to Lys-592 is disordered.

Has a role in the perception of gravity. This Drosophila mojavensis (Fruit fly) protein is Protein alan shepard.